The primary structure comprises 310 residues: Ribose-phosphate pyrophosphokinase (310 aa).

ATP contacts are provided by residues 34 to 36 and 93 to 94; these read DQE and RQ. The Mg(2+) site is built by histidine 127 and aspartate 167. Lysine 190 is an active-site residue. D-ribose 5-phosphate is bound by residues arginine 192, aspartate 216, and 220–224; that span reads DSGGT.

Belongs to the ribose-phosphate pyrophosphokinase family. Class I subfamily. As to quaternary structure, homohexamer. It depends on Mg(2+) as a cofactor.

The protein localises to the cytoplasm. It catalyses the reaction D-ribose 5-phosphate + ATP = 5-phospho-alpha-D-ribose 1-diphosphate + AMP + H(+). The protein operates within metabolic intermediate biosynthesis; 5-phospho-alpha-D-ribose 1-diphosphate biosynthesis; 5-phospho-alpha-D-ribose 1-diphosphate from D-ribose 5-phosphate (route I): step 1/1. Involved in the biosynthesis of the central metabolite phospho-alpha-D-ribosyl-1-pyrophosphate (PRPP) via the transfer of pyrophosphoryl group from ATP to 1-hydroxyl of ribose-5-phosphate (Rib-5-P). The protein is Ribose-phosphate pyrophosphokinase of Rhizobium meliloti (strain 1021) (Ensifer meliloti).